A 287-amino-acid chain; its full sequence is 2' cyclic ADP-D-ribose synthase BtTIR (287 aa).

One can recognise a TIR domain in the interval 155–287; sequence KQYDFFISHA…DDIVENLKNL (133 aa). Residue glutamate 230 is part of the active site.

In terms of assembly, homodimer.

The catalysed reaction is NAD(+) = 2'cADPR + nicotinamide + H(+). Functionally, NAD(+) hydrolase (NADase) that cleaves NAD(+) into nicotinamide and 2' cyclic ADP-D-ribose (2'cADPR). This Bacteroides thetaiotaomicron protein is 2' cyclic ADP-D-ribose synthase BtTIR.